The chain runs to 187 residues: Troponin I, slow skeletal muscle (187 aa).

At proline 2 the chain carries N-acetylproline. An involved in binding TNC region spans residues 2–48 (PEVERKSKITASRKLMLKSLMLAKAKECWEQEHEEREAEKVRYLSER). Serine 58 carries the phosphoserine modification. An involved in binding TNC and actin region spans residues 97-118 (LKLKVLDLRGKFKRPPLRRVRV).

The protein belongs to the troponin I family. As to quaternary structure, binds to actin and tropomyosin.

In terms of biological role, troponin I is the inhibitory subunit of troponin, the thin filament regulatory complex which confers calcium-sensitivity to striated muscle actomyosin ATPase activity. The protein is Troponin I, slow skeletal muscle (Tnni1) of Mus musculus (Mouse).